A 40-amino-acid chain; its full sequence is Dolichyl-diphosphooligosaccharide--protein glycosyltransferase subunit 4 (40 aa).

Topologically, residues 1-7 (MITDMQL) are lumenal. The helical transmembrane segment at 8–28 (AIFSNVLGVFLFLLVVAYHYI) threads the bilayer. The Cytoplasmic portion of the chain corresponds to 29–40 (NANTGKPSAKAK).

The protein belongs to the OST4 family. In terms of assembly, component of the oligosaccharyltransferase (OST) complex.

It is found in the endoplasmic reticulum membrane. Subunit of the oligosaccharyl transferase (OST) complex that catalyzes the initial transfer of a defined glycan (Glc(3)Man(9)GlcNAc(2) in eukaryotes) from the lipid carrier dolichol-pyrophosphate to an asparagine residue within an Asn-X-Ser/Thr consensus motif in nascent polypeptide chains, the first step in protein N-glycosylation. N-glycosylation occurs cotranslationally and the complex associates with the Sec61 complex at the channel-forming translocon complex that mediates protein translocation across the endoplasmic reticulum (ER). All subunits are required for a maximal enzyme activity. The polypeptide is Dolichyl-diphosphooligosaccharide--protein glycosyltransferase subunit 4 (Drosophila sechellia (Fruit fly)).